A 970-amino-acid chain; its full sequence is Pentatricopeptide repeat-containing protein At1g18485 (970 aa).

PPR repeat units lie at residues 119 to 149 (DDVL…LRSK), 150 to 185 (NLFQ…DLLP), 186 to 220 (DHFT…GLVE), 221 to 251 (DVFV…MPER), 252 to 282 (NLVS…MMEE), 291 to 325 (DVAT…RLDK), 326 to 356 (ELVL…NNNK), 357 to 391 (NVVS…GEDV), 394 to 428 (DEVT…EFVY), 429 to 459 (NELV…IRSK), 460 to 494 (TVNS…GLLP), 495 to 529 (DSFT…WLER), 530 to 560 (DLFV…MEDK), 561 to 595 (SLVS…GIQL), 597 to 630 (GISM…LLED), 631 to 661 (DAFI…LKEK), 662 to 696 (STAS…GHNP), 697 to 727 (DDLT…MKSS), and 733 to 764 (NLKH…MSEE). The segment at 770–845 (WKSLLSSCRI…AGCSWIELNR (76 aa)) is type E motif. The interval 846 to 875 (KVFSFVVGERFLDGFEEIKSLWSILEMKIS) is type E(+) motif. The tract at residues 876–970 (KMGYRPDTMS…NGVCSCGDYW (95 aa)) is type DYW motif.

This sequence belongs to the PPR family. PCMP-H subfamily.

The sequence is that of Pentatricopeptide repeat-containing protein At1g18485 (PCMP-H8) from Arabidopsis thaliana (Mouse-ear cress).